The primary structure comprises 153 residues: Membrane-spanning 4-domains subfamily A member 13 (153 aa).

4 helical membrane-spanning segments follow: residues 1–21 (MTGI…MGQI), 36–56 (GCSL…RATW), 71–91 (ILCM…LSTF), and 111–131 (VLLS…IFGC).

It belongs to the MS4A family.

It localises to the membrane. In terms of biological role, may be involved in signal transduction as a component of a multimeric receptor complex. This is Membrane-spanning 4-domains subfamily A member 13 (MS4A13) from Bos taurus (Bovine).